A 383-amino-acid chain; its full sequence is ATP phosphoribosyltransferase regulatory subunit (383 aa).

This sequence belongs to the class-II aminoacyl-tRNA synthetase family. HisZ subfamily. Heteromultimer composed of HisG and HisZ subunits.

The protein resides in the cytoplasm. Its pathway is amino-acid biosynthesis; L-histidine biosynthesis; L-histidine from 5-phospho-alpha-D-ribose 1-diphosphate: step 1/9. Its function is as follows. Required for the first step of histidine biosynthesis. May allow the feedback regulation of ATP phosphoribosyltransferase activity by histidine. This Cupriavidus taiwanensis (strain DSM 17343 / BCRC 17206 / CCUG 44338 / CIP 107171 / LMG 19424 / R1) (Ralstonia taiwanensis (strain LMG 19424)) protein is ATP phosphoribosyltransferase regulatory subunit.